A 345-amino-acid chain; its full sequence is MSYGLTGTSSKLRGTSSIFSWTQVRHFSRRRIAYPFYPFKKLGRQHPKKHDTNLKTAMRQFLGPKNYKGEYVMNKYFTVPTNHVPNYIKPDLERGQSLEHPVTKKPLQLRYDGTLGPPPVENKRLQNIFKDRLLQPFPSNPHCKTNYVLSPQLKQSIFEEITVEGLSAQQVSQKYGLKIPRVEAIVKLVSVENSWNRRNRVSSDLKTMDETLYRMFPVFDSDASFKRENLSEIPVPQKTLASRFLTIAESEPFGPVDAAHVLELEPAVETLRNLSTVGEHSSGHQQSTNKNTKVIYGELVEGERSQYKFTNAKVGKVGYRYGSGNRDNKKDRRIGFNKLGQMVYI.

The transit peptide at Met1 to Phe27 directs the protein to the mitochondrion.

Belongs to the mitochondrion-specific ribosomal protein mS45 family. In terms of assembly, component of the mitochondrial small ribosomal subunit (mt-SSU). Mature yeast 74S mitochondrial ribosomes consist of a small (37S) and a large (54S) subunit. The 37S small subunit contains a 15S ribosomal RNA (15S mt-rRNA) and 34 different proteins. The 54S large subunit contains a 21S rRNA (21S mt-rRNA) and 46 different proteins.

Its subcellular location is the mitochondrion. Functionally, component of the mitochondrial ribosome (mitoribosome), a dedicated translation machinery responsible for the synthesis of mitochondrial genome-encoded proteins, including at least some of the essential transmembrane subunits of the mitochondrial respiratory chain. The mitoribosomes are attached to the mitochondrial inner membrane and translation products are cotranslationally integrated into the membrane. The polypeptide is Small ribosomal subunit protein mS45 (MRPS35) (Saccharomyces cerevisiae (strain ATCC 204508 / S288c) (Baker's yeast)).